Consider the following 312-residue polypeptide: Telomere-binding protein OPG077 (312 aa).

Belongs to the orthopoxvirus OPG077 family.

The protein localises to the virion. In terms of biological role, DNA-binding protein which binds to the hairpin form of the viral telomeric sequence. Required for the production of mature virions (MV). The sequence is that of Telomere-binding protein OPG077 (OPG077) from Vaccinia virus (strain L-IVP) (VACV).